Consider the following 471-residue polypeptide: Glutamate--tRNA ligase (471 aa).

Positions Pro9 to Gly19 match the 'HIGH' region motif. 4 residues coordinate Zn(2+): Cys98, Cys100, Cys125, and His127. A 'KMSKS' region motif is present at residues Lys237–Arg241. Lys240 is a binding site for ATP.

Belongs to the class-I aminoacyl-tRNA synthetase family. Glutamate--tRNA ligase type 1 subfamily. Monomer. Zn(2+) serves as cofactor.

The protein localises to the cytoplasm. It carries out the reaction tRNA(Glu) + L-glutamate + ATP = L-glutamyl-tRNA(Glu) + AMP + diphosphate. Its function is as follows. Catalyzes the attachment of glutamate to tRNA(Glu) in a two-step reaction: glutamate is first activated by ATP to form Glu-AMP and then transferred to the acceptor end of tRNA(Glu). This chain is Glutamate--tRNA ligase, found in Shigella dysenteriae serotype 1 (strain Sd197).